We begin with the raw amino-acid sequence, 441 residues long: Zinc finger and BTB domain-containing protein 26 (441 aa).

One can recognise a BTB domain in the interval 33–97 (CDVTVLIDDI…CYSGVLEFPE (65 aa)). The interval 134-177 (DSKEGCEPQSASPQSKEQQGDARGSPKQDSPCIHPSEDSMDMED) is disordered. K184 participates in a covalent cross-link: Glycyl lysine isopeptide (Lys-Gly) (interchain with G-Cter in SUMO2). The tract at residues 194–216 (VRSKKDQNQFISSEPTALHSSEP) is disordered. Positions 201–216 (NQFISSEPTALHSSEP) are enriched in polar residues. K255 participates in a covalent cross-link: Glycyl lysine isopeptide (Lys-Gly) (interchain with G-Cter in SUMO2). 4 C2H2-type zinc fingers span residues 273–295 (HQCPKCTRVFRHLENYANHLKMH), 298–320 (FMCLLCGKTFTQKGNLHRHMRVH), 326–348 (FQCKICGKTFSQKCSLQDHLNLH), and 354–377 (HKCNYCDMVFAHKPVLRKHLKQLH). A Glycyl lysine isopeptide (Lys-Gly) (interchain with G-Cter in SUMO2) cross-link involves residue K329.

In terms of tissue distribution, ubiquitous.

It is found in the nucleus. May be involved in transcriptional regulation. The polypeptide is Zinc finger and BTB domain-containing protein 26 (ZBTB26) (Homo sapiens (Human)).